We begin with the raw amino-acid sequence, 353 residues long: Rhodopsin (353 aa).

Topologically, residues 1 to 36 (MNGTEGPYFYVPMVNTSGIVRSPYEYPQYYLVNPAA) are extracellular. 2 N-linked (GlcNAc...) asparagine glycosylation sites follow: Asn-2 and Asn-15. A helical membrane pass occupies residues 37 to 61 (YAALGAYMFLLILVGFPINFLTLYV). The Cytoplasmic portion of the chain corresponds to 62–73 (TIEHKKLRTPLN). Residues 74–96 (YILLNLAVADLFMVFGGFTTTMY) traverse the membrane as a helical segment. Residues 97 to 110 (TSMHGYFVLGRLGC) are Extracellular-facing. Cysteines 110 and 187 form a disulfide. Residues 111 to 133 (NIEGFFATLGGEIALWSLVVLAI) traverse the membrane as a helical segment. Positions 134 to 136 (ERW) match the 'Ionic lock' involved in activated form stabilization motif. The Cytoplasmic portion of the chain corresponds to 134 to 152 (ERWVVVCKPISNFRFGENH). The helical transmembrane segment at 153-173 (AIMGLAFTWLMALACAAPPLV) threads the bilayer. Over 174–202 (GWSRYIPEGMQCSCGIDYYTRAEGFNNES) the chain is Extracellular. The N-linked (GlcNAc...) asparagine glycan is linked to Asn-200. A helical membrane pass occupies residues 203 to 224 (FVIYMFICHFSIPLLVVFFCYG). At 225–252 (RLLCAVKEAAAAQQESETTQRAEREVTR) the chain is on the cytoplasmic side. Residues 253-274 (MVIMMVIAFLVCWLPYASVAWW) traverse the membrane as a helical segment. Topologically, residues 275 to 286 (IFTHQGSDFGPV) are extracellular. Residues 287–308 (FMTIPAFFAKSSSIYNPMIYIC) traverse the membrane as a helical segment. The residue at position 296 (Lys-296) is an N6-(retinylidene)lysine. Residues 309 to 353 (LNKQFRHCMITTLCCGKNPFEEEEGASTASKTEASSVSSSSVSPA) are Cytoplasmic-facing. Residues Cys-322 and Cys-323 are each lipidated (S-palmitoyl cysteine). The disordered stretch occupies residues 331-353 (EEGASTASKTEASSVSSSSVSPA). Residues 334–353 (ASTASKTEASSVSSSSVSPA) are compositionally biased toward low complexity.

Belongs to the G-protein coupled receptor 1 family. Opsin subfamily. Post-translationally, phosphorylated on some or all of the serine and threonine residues present in the C-terminal region. In terms of processing, contains one covalently linked retinal chromophore.

Its subcellular location is the membrane. It localises to the cell projection. It is found in the cilium. The protein localises to the photoreceptor outer segment. Photoreceptor required for image-forming vision at low light intensity. While most salt water fish species use retinal as chromophore, most freshwater fish use 3-dehydroretinal, or a mixture of retinal and 3-dehydroretinal. Light-induced isomerization of 11-cis to all-trans retinal triggers a conformational change that activates signaling via G-proteins. Subsequent receptor phosphorylation mediates displacement of the bound G-protein alpha subunit by arrestin and terminates signaling. The protein is Rhodopsin (rho) of Diplodus vulgaris (Common two-banded seabream).